A 905-amino-acid chain; its full sequence is Probable cation-transporting ATPase F (905 aa).

A run of 3 helical transmembrane segments spans residues 84–104, 248–268, and 283–303; these read EFVD…VGFI, FSKF…GVGL, and ALAV…TLAI. Asp333 serves as the catalytic 4-aspartylphosphate intermediate. Asp643 and Asp647 together coordinate Mg(2+). 6 helical membrane passes run 716-736, 738-758, 778-798, 808-828, 842-862, and 872-892; these read ILAA…ILWI, MTTA…AGIM, TLLV…WELD, TAAL…CRSL, WIIL…YLPA, and IDIG…IVVA.

This sequence belongs to the cation transport ATPase (P-type) (TC 3.A.3) family. Type IIA subfamily.

The protein localises to the cell membrane. The catalysed reaction is ATP + H2O = ADP + phosphate + H(+). The protein is Probable cation-transporting ATPase F (ctpF) of Mycobacterium bovis (strain ATCC BAA-935 / AF2122/97).